The primary structure comprises 265 residues: 3-methyl-2-oxobutanoate hydroxymethyltransferase (265 aa).

Residues Asp-45 and Asp-84 each contribute to the Mg(2+) site. Residues 45–46 (DS), Asp-84, and Lys-112 contribute to the 3-methyl-2-oxobutanoate site. Glu-114 provides a ligand contact to Mg(2+). Glu-181 functions as the Proton acceptor in the catalytic mechanism.

This sequence belongs to the PanB family. As to quaternary structure, homodecamer; pentamer of dimers. Mg(2+) serves as cofactor.

It is found in the cytoplasm. It carries out the reaction 3-methyl-2-oxobutanoate + (6R)-5,10-methylene-5,6,7,8-tetrahydrofolate + H2O = 2-dehydropantoate + (6S)-5,6,7,8-tetrahydrofolate. It functions in the pathway cofactor biosynthesis; (R)-pantothenate biosynthesis; (R)-pantoate from 3-methyl-2-oxobutanoate: step 1/2. Catalyzes the reversible reaction in which hydroxymethyl group from 5,10-methylenetetrahydrofolate is transferred onto alpha-ketoisovalerate to form ketopantoate. In Yersinia pseudotuberculosis serotype IB (strain PB1/+), this protein is 3-methyl-2-oxobutanoate hydroxymethyltransferase.